The primary structure comprises 248 residues: MLTFNLNAISSSFSVVPFHANYPLSTQTQLLVPSNLSYSFATTGTRKFKSFQLKAGFWESIKSGLMKNNSMQVIDPPSADEEDEEPLPQEFVLVEKTEPDGTIEQIIFSSGGDVDVYDLQALCDKGWPRRPLSKLAAALKNSYIVASLHSIRKSPGSEGNEQKRLIGMARATSDHAFNATIWDVLVDPGYQGQGLGKALIEKLIRTLLQRDIGNITLFADSQVVEFYRNLGFEADPEGIKGMFWYPNH.

The N-acetyltransferase domain maps to 106-248 (IIFSSGGDVD…IKGMFWYPNH (143 aa)).

This sequence belongs to the acetyltransferase family. As to quaternary structure, does not interact with the effector Avh52 from the pathogen Phytophtora sojae.

It localises to the cytoplasm. It is found in the nucleus. In terms of biological role, may acetylate histones H2A and H3. The polypeptide is Probable acetyltransferase TAP2 (Glycine max (Soybean)).